A 270-amino-acid polypeptide reads, in one-letter code: 3-methyl-2-oxobutanoate hydroxymethyltransferase (270 aa).

Mg(2+) is bound by residues Asp43 and Asp82. 3-methyl-2-oxobutanoate contacts are provided by residues 43 to 44 (DS), Asp82, and Lys112. Glu114 contacts Mg(2+). Glu179 serves as the catalytic Proton acceptor.

It belongs to the PanB family. In terms of assembly, homodecamer; pentamer of dimers. Mg(2+) is required as a cofactor.

Its subcellular location is the cytoplasm. It carries out the reaction 3-methyl-2-oxobutanoate + (6R)-5,10-methylene-5,6,7,8-tetrahydrofolate + H2O = 2-dehydropantoate + (6S)-5,6,7,8-tetrahydrofolate. It functions in the pathway cofactor biosynthesis; (R)-pantothenate biosynthesis; (R)-pantoate from 3-methyl-2-oxobutanoate: step 1/2. Its function is as follows. Catalyzes the reversible reaction in which hydroxymethyl group from 5,10-methylenetetrahydrofolate is transferred onto alpha-ketoisovalerate to form ketopantoate. In Oceanobacillus iheyensis (strain DSM 14371 / CIP 107618 / JCM 11309 / KCTC 3954 / HTE831), this protein is 3-methyl-2-oxobutanoate hydroxymethyltransferase.